Reading from the N-terminus, the 277-residue chain is NH(3)-dependent NAD(+) synthetase (277 aa).

ATP is bound at residue 36 to 43; it reads GLSGGIDS. Aspartate 42 provides a ligand contact to Mg(2+). Arginine 118 lines the deamido-NAD(+) pocket. Threonine 138 provides a ligand contact to ATP. Glutamate 143 is a Mg(2+) binding site. 2 residues coordinate ATP: lysine 167 and serine 189.

The protein belongs to the NAD synthetase family. In terms of assembly, homodimer.

It carries out the reaction deamido-NAD(+) + NH4(+) + ATP = AMP + diphosphate + NAD(+) + H(+). Its pathway is cofactor biosynthesis; NAD(+) biosynthesis; NAD(+) from deamido-NAD(+) (ammonia route): step 1/1. Functionally, catalyzes the ATP-dependent amidation of deamido-NAD to form NAD. Uses ammonia as a nitrogen source. The sequence is that of NH(3)-dependent NAD(+) synthetase from Pelodictyon phaeoclathratiforme (strain DSM 5477 / BU-1).